The following is a 146-amino-acid chain: Myoglobin (146 aa).

The region spanning 2–140 (ADLDAVLKCW…VIADLEANYK (139 aa)) is the Globin domain. His59 lines the nitrite pocket. His59 contributes to the O2 binding site. His88 is a binding site for heme b.

This sequence belongs to the globin family. Monomeric.

Its subcellular location is the cytoplasm. It localises to the sarcoplasm. It catalyses the reaction Fe(III)-heme b-[protein] + nitric oxide + H2O = Fe(II)-heme b-[protein] + nitrite + 2 H(+). The enzyme catalyses H2O2 + AH2 = A + 2 H2O. Its function is as follows. Monomeric heme protein which primary function is to store oxygen and facilitate its diffusion within muscle tissues. Reversibly binds oxygen through a pentacoordinated heme iron and enables its timely and efficient release as needed during periods of heightened demand. Depending on the oxidative conditions of tissues and cells, and in addition to its ability to bind oxygen, it also has a nitrite reductase activity whereby it regulates the production of bioactive nitric oxide. Under stress conditions, like hypoxia and anoxia, it also protects cells against reactive oxygen species thanks to its pseudoperoxidase activity. In Katsuwonus pelamis (Skipjack tuna), this protein is Myoglobin (mb).